A 422-amino-acid polypeptide reads, in one-letter code: Regulator of sigma-W protease RasP (422 aa).

4 consecutive transmembrane segments (helical) span residues 6 to 26, 175 to 195, 346 to 366, and 394 to 414; these read VIAF…GHLL, IAAG…MLGL, IVNL…VNLL, and EAFV…VVTW. Histidine 20 lines the Zn(2+) pocket. Glutamate 21 is a catalytic residue. Histidine 24 provides a ligand contact to Zn(2+). One can recognise a PDZ domain in the interval 186–271; that stretch reads AYVILVMLGL…TLHISVTPEA (86 aa).

Belongs to the peptidase M50B family. Zn(2+) serves as cofactor.

The protein localises to the cell membrane. In terms of biological role, is responsible for site-2 cleavage of the RsiW anti-sigma factor. This results, after a third proteolytic step catalyzed by the ClpXP protease, in the release of SigW and the transcription activation of the genes under the control of the sigma-W factor. Can also cleave liberated signal peptides of PenP and Mpr, probably within in the cell membrane. The chain is Regulator of sigma-W protease RasP from Bacillus subtilis (strain 168).